Consider the following 1964-residue polypeptide: Neurogenic locus notch homolog protein 4 (1964 aa).

An N-terminal signal peptide occupies residues 1 to 20 (MQPQLLLLLLLPLNFPVILT). EGF-like domains lie at 21–60 (RELLCGGSPEPCANGGTCLRLSRGQGICQCAPGFLGETCQ), 61–112 (FPDP…DRCQ), 115–152 (LEELCPPSFCSNGGHCYVQASGRPQCSCEPGWTGEQCQ), and 153–189 (LRDFCSANPCANGGVCLATYPQIQCRCPPGFEGHTCE). The Extracellular portion of the chain corresponds to 21–1443 (RELLCGGSPE…TRPSANQLPW (1423 aa)). Cystine bridges form between cysteine 25-cysteine 38, cysteine 32-cysteine 48, cysteine 50-cysteine 59, cysteine 65-cysteine 77, cysteine 71-cysteine 100, cysteine 102-cysteine 111, cysteine 119-cysteine 130, cysteine 124-cysteine 140, cysteine 142-cysteine 151, cysteine 157-cysteine 168, cysteine 162-cysteine 177, cysteine 179-cysteine 188, cysteine 195-cysteine 208, cysteine 202-cysteine 217, cysteine 219-cysteine 228, cysteine 235-cysteine 246, cysteine 240-cysteine 259, cysteine 261-cysteine 270, cysteine 277-cysteine 288, cysteine 282-cysteine 297, cysteine 299-cysteine 308, cysteine 315-cysteine 329, cysteine 323-cysteine 338, cysteine 340-cysteine 349, cysteine 356-cysteine 367, cysteine 361-cysteine 376, cysteine 378-cysteine 387, cysteine 393-cysteine 404, cysteine 398-cysteine 415, cysteine 417-cysteine 426, cysteine 433-cysteine 449, cysteine 443-cysteine 458, cysteine 460-cysteine 469, cysteine 476-cysteine 487, cysteine 481-cysteine 496, cysteine 498-cysteine 507, cysteine 514-cysteine 525, cysteine 519-cysteine 534, cysteine 536-cysteine 545, cysteine 552-cysteine 563, cysteine 557-cysteine 572, cysteine 574-cysteine 583, cysteine 590-cysteine 601, cysteine 595-cysteine 610, cysteine 612-cysteine 621, cysteine 626-cysteine 637, cysteine 631-cysteine 646, cysteine 648-cysteine 655, cysteine 662-cysteine 669, cysteine 664-cysteine 674, cysteine 676-cysteine 685, cysteine 692-cysteine 703, cysteine 697-cysteine 712, cysteine 714-cysteine 723, cysteine 730-cysteine 741, cysteine 735-cysteine 750, cysteine 752-cysteine 761, cysteine 768-cysteine 779, cysteine 773-cysteine 788, cysteine 790-cysteine 799, cysteine 807-cysteine 818, cysteine 812-cysteine 827, cysteine 829-cysteine 838, cysteine 845-cysteine 856, cysteine 850-cysteine 865, cysteine 867-cysteine 876, cysteine 882-cysteine 903, cysteine 897-cysteine 912, cysteine 914-cysteine 923, cysteine 930-cysteine 941, cysteine 935-cysteine 950, cysteine 952-cysteine 961, cysteine 968-cysteine 979, cysteine 973-cysteine 988, cysteine 990-cysteine 999, cysteine 1006-cysteine 1019, cysteine 1011-cysteine 1028, cysteine 1030-cysteine 1039, cysteine 1046-cysteine 1057, cysteine 1051-cysteine 1069, cysteine 1071-cysteine 1080, cysteine 1087-cysteine 1098, cysteine 1092-cysteine 1110, cysteine 1112-cysteine 1121, cysteine 1130-cysteine 1142, cysteine 1136-cysteine 1155, cysteine 1157-cysteine 1166, cysteine 1174-cysteine 1187, cysteine 1183-cysteine 1199, cysteine 1210-cysteine 1234, cysteine 1216-cysteine 1229, cysteine 1225-cysteine 1241, cysteine 1247-cysteine 1273, cysteine 1255-cysteine 1268, and cysteine 1264-cysteine 1280. Positions 191–229 (DINECFLEPGPCPQGTSCHNTLGSYQCLCPVGQEGPQCK) constitute an EGF-like 5; calcium-binding domain. The EGF-like 6 domain occupies 231–271 (RKGACPPGSCLNGGTCQLVPEGHSTFHLCLCPPGFTGLDCE). Residues 273–309 (NPDDCVRHQCQNGATCLDGLDTYTCLCPKTWKGWDCS) form the EGF-like 7; calcium-binding domain. An EGF-like 8; calcium-binding domain is found at 311 to 350 (DIDECEARGPPRCRNGGTCQNTAGSFHCVCVSGWGGAGCE). Residues 352-388 (NLDDCAAATCAPGSTCIDRVGSFSCLCPPGRTGLLCH) form the EGF-like 9; calcium-binding domain. One can recognise an EGF-like 10 domain in the interval 389–427 (LEDMCLSQPCHVNAQCSTNPLTGSTLCICQPGYSGSTCH). One can recognise an EGF-like 11; calcium-binding domain in the interval 429-470 (DLDECQMAQQGPSPCEHGGSCINTPGSFNCLCLPGYTGSRCE). Positions 472–508 (DHNECLSQPCHPGSTCLDLLATFHCLCPPGLEGRLCE) constitute an EGF-like 12; calcium-binding domain. An EGF-like 13; calcium-binding domain is found at 510-546 (EVNECTSNPCLNQAACHDLLNGFQCLCLPGFTGARCE). In terms of domain architecture, EGF-like 14; calcium-binding spans 548–584 (DMDECSSTPCANGGRCRDQPGAFYCECLPGFEGPHCE). The EGF-like 15; calcium-binding domain maps to 586 to 622 (EVDECLSDPCPVGASCLDLPGAFFCLCRPGFTGQLCE). 14 EGF-like domains span residues 623 to 656 (VPLCTPNMCQPGQQCQGQEHRAPCLCPDGSPGCV), 658 to 686 (AEDNCPCHHGHCQRSLCVCDEGWTGPECE), 688 to 724 (ELGGCISTPCAHGGTCHPQPSGYNCTCPAGYMGLTCS), 726 to 762 (EVTACHSGPCLNGGSCSIRPEGYSCTCLPSHTGRHCQ), 764 to 800 (AVDHCVSASCLNGGTCVNKPGTFFCLCATGFQGLHCE), 803 to 839 (TNPSCADSPCRNKATCQDTPRGARCLCSPGYTGSSCQ), 841 to 877 (LIDLCARKPCPHTARCLQSGPSFQCLCLQGWTGALCD), 878 to 924 (FPLS…KLCQ), 926 to 962 (NVNPCEPNPCHHGSTCVPQPSGYVCQCAPGYEGQNCS), 964 to 1000 (VLDACQSQPCHNHGTCTSRPGGFHCACPPGFVGLRCE), 1002 to 1040 (DVDECLDRPCHPSGTAACHSLANAFYCQCLPGHTGQRCE), 1042 to 1081 (EMDLCQSQPCSNGGSCEITTGPPPGFTCHCPKGFEGPTCS), 1083 to 1122 (KALSCGIHHCHNGGLCLPSPKPGSPPLCACLSGFGGPDCL), and 1126 to 1167 (APPG…PRCQ). Asparagine 711 carries N-linked (GlcNAc...) asparagine glycosylation. Asparagine 960 carries an N-linked (GlcNAc...) asparagine glycan. A glycan (N-linked (GlcNAc...) asparagine) is linked at asparagine 1139. 3 LNR repeats span residues 1166–1209 (CQRP…PWKG), 1210–1241 (CPPHSQCWLLFRDGRCHPQCDSEECLFDGYDC), and 1247–1287 (CIPA…GEDS). The interval 1345 to 1369 (EELSGARDSSSWERQAPPTQPLGKE) is disordered. Residues 1444–1464 (PILCSPVVGVLLLALGALLVL) traverse the membrane as a helical segment. Topologically, residues 1465-1964 (QLIRRRRREH…PLNSVVRNLN (500 aa)) are cytoplasmic. The disordered stretch occupies residues 1516-1535 (VDEDGVAMCSGPEEGEAEET). 5 ANK repeats span residues 1628–1657 (TGETPLHLAARFSRPTAARRLLEAGANPNQ), 1661–1691 (AGRTPLHTAVAADAREVCQLLLASRQTTVDA), 1695–1724 (DGTTPLMLAARLAVEDLVEELIAARADVGA), 1728–1757 (RGKTALHWAAAVNNARAARSLLQAGADKDA), and 1761–1790 (REQTPLFLAAREGAVEVAQLLLELGAARGL). The disordered stretch occupies residues 1879 to 1907 (RSGSCGGPTTRGRRFSAGSRGRRGARASQ).

The protein belongs to the NOTCH family. As to quaternary structure, heterodimer of a C-terminal fragment N(TM) and a N-terminal fragment N(EC) which are probably linked by disulfide bonds. Interacts with MAML1, MAML2 and MAML3 which act as transcriptional coactivators for NOTCH4. Synthesized in the endoplasmic reticulum as an inactive form which is proteolytically cleaved by a furin-like convertase in the trans-Golgi network before it reaches the plasma membrane to yield an active, ligand-accessible form. Cleavage results in a C-terminal fragment N(TM) and a N-terminal fragment N(EC). Following ligand binding, it is cleaved by TNF-alpha converting enzyme (TACE) to yield a membrane-associated intermediate fragment called notch extracellular truncation (NEXT). This fragment is then cleaved by presenilin dependent gamma-secretase to release a notch-derived peptide containing the intracellular domain (NICD) from the membrane. Post-translationally, phosphorylated. As to expression, highly expressed in lung, moderately in heart kidney, and at lower levels in the ovary and skeletal muscle. A very low expression is seen in the brain, intestine, liver and testis.

It localises to the cell membrane. The protein localises to the nucleus. Functions as a receptor for membrane-bound ligands Jagged1, Jagged2 and Delta1 to regulate cell-fate determination. Upon ligand activation through the released notch intracellular domain (NICD) it forms a transcriptional activator complex with RBPJ/RBPSUH and activates genes of the enhancer of split locus. Affects the implementation of differentiation, proliferation and apoptotic programs. May regulate branching morphogenesis in the developing vascular system. In Mus musculus (Mouse), this protein is Neurogenic locus notch homolog protein 4.